Consider the following 595-residue polypeptide: Cyclin-dependent kinase-like 3 (595 aa).

Residues 4–286 (YETLGKVGEG…STDLLRHDYF (283 aa)) enclose the Protein kinase domain. ATP contacts are provided by residues 10–18 (VGEGSYGTV) and lysine 33. Positions 45 to 51 (KIATREI) match the [NKR]KIAxRE motif. Aspartate 125 functions as the Proton acceptor in the catalytic mechanism. Threonine 158 bears the Phosphothreonine mark. Residue tyrosine 160 is modified to Phosphotyrosine. Disordered regions lie at residues 362-427 (VIKA…PHAG), 448-513 (SSNL…NKRK), and 551-586 (RESKKTDSSKIPTLLSMDPNQEKQEGGDGDCEGKNL). Residues 368–386 (GKGDVPDQKKPEYEGDHRQ) show a composition bias toward basic and acidic residues. Polar residues predominate over residues 387–397 (QGTADDTQPSS). Low complexity predominate over residues 448-457 (SSNLSHPNSR). 2 stretches are compositionally biased toward polar residues: residues 468–491 (SSQTIGQTLSNSRQEDTGPTQVQT) and 499–509 (RTGQNDQISSG). Residues 570–585 (NQEKQEGGDGDCEGKN) are compositionally biased toward basic and acidic residues.

Belongs to the protein kinase superfamily. CMGC Ser/Thr protein kinase family. CDC2/CDKX subfamily.

It localises to the cytoplasm. It carries out the reaction L-seryl-[protein] + ATP = O-phospho-L-seryl-[protein] + ADP + H(+). It catalyses the reaction L-threonyl-[protein] + ATP = O-phospho-L-threonyl-[protein] + ADP + H(+). The protein is Cyclin-dependent kinase-like 3 of Mus musculus (Mouse).